Consider the following 325-residue polypeptide: Tetraacyldisaccharide 4'-kinase (325 aa).

55–62 (TAGGNGKT) contributes to the ATP binding site.

The protein belongs to the LpxK family.

It catalyses the reaction a lipid A disaccharide + ATP = a lipid IVA + ADP + H(+). The protein operates within glycolipid biosynthesis; lipid IV(A) biosynthesis; lipid IV(A) from (3R)-3-hydroxytetradecanoyl-[acyl-carrier-protein] and UDP-N-acetyl-alpha-D-glucosamine: step 6/6. Functionally, transfers the gamma-phosphate of ATP to the 4'-position of a tetraacyldisaccharide 1-phosphate intermediate (termed DS-1-P) to form tetraacyldisaccharide 1,4'-bis-phosphate (lipid IVA). The polypeptide is Tetraacyldisaccharide 4'-kinase (Salmonella enteritidis PT4 (strain P125109)).